We begin with the raw amino-acid sequence, 455 residues long: GTPase Der (455 aa).

EngA-type G domains are found at residues proline 4–aspartate 169 and isoleucine 178–arginine 353. Residues glycine 10–serine 17, aspartate 57–leucine 61, asparagine 120–glutamate 123, glycine 184–serine 191, aspartate 231–isoleucine 235, and asparagine 296–aspartate 299 each bind GTP. The KH-like domain occupies arginine 354–glutamine 439.

The protein belongs to the TRAFAC class TrmE-Era-EngA-EngB-Septin-like GTPase superfamily. EngA (Der) GTPase family. As to quaternary structure, associates with the 50S ribosomal subunit.

GTPase that plays an essential role in the late steps of ribosome biogenesis. The sequence is that of GTPase Der from Synechococcus sp. (strain CC9605).